The following is a 354-amino-acid chain: Thiamine thiazole synthase 1, chloroplastic (354 aa).

Residues 1–45 constitute a chloroplast transit peptide; the sequence is MATAAASSLLKSSFAGSRLPAATRTTPASLVVATGPRGAGAGPIC. Substrate-binding positions include A100, 120-121, G128, and V193; that span reads EQ. C222 is subject to 2,3-didehydroalanine (Cys). Residues D224, H239, M291, and 301–303 contribute to the substrate site; that span reads RMG.

Belongs to the THI4 family. Homooctamer. Requires Fe cation as cofactor. Post-translationally, during the catalytic reaction, a sulfide is transferred from Cys-222 to a reaction intermediate, generating a dehydroalanine residue. Highest expression in developing embryos and green leaves and a very low level expression seen in endosperm, roots, etiolated shoots and immature ears.

The protein resides in the plastid. Its subcellular location is the chloroplast. The enzyme catalyses [ADP-thiazole synthase]-L-cysteine + glycine + NAD(+) = [ADP-thiazole synthase]-dehydroalanine + ADP-5-ethyl-4-methylthiazole-2-carboxylate + nicotinamide + 3 H2O + 2 H(+). In terms of biological role, involved in biosynthesis of the thiamine precursor thiazole. Catalyzes the conversion of NAD and glycine to adenosine diphosphate 5-(2-hydroxyethyl)-4-methylthiazole-2-carboxylic acid (ADT), an adenylated thiazole intermediate. The reaction includes an iron-dependent sulfide transfer from a conserved cysteine residue of the protein to a thiazole intermediate. The enzyme can only undergo a single turnover, which suggests it is a suicide enzyme. May have additional roles in adaptation to various stress conditions and in DNA damage tolerance. The sequence is that of Thiamine thiazole synthase 1, chloroplastic from Zea mays (Maize).